The following is a 142-amino-acid chain: Succinate dehydrogenase assembly factor 2, mitochondrial (142 aa).

This sequence belongs to the SDHAF2 family. Interacts with the flavoprotein subunit within the SDH catalytic dimer.

The protein resides in the mitochondrion matrix. In terms of biological role, plays an essential role in the assembly of succinate dehydrogenase (SDH), an enzyme complex (also referred to as respiratory complex II) that is a component of both the tricarboxylic acid (TCA) cycle and the mitochondrial electron transport chain, and which couples the oxidation of succinate to fumarate with the reduction of ubiquinone (coenzyme Q) to ubiquinol. Required for flavinylation (covalent attachment of FAD) of the flavoprotein subunit of the SDH catalytic dimer. This chain is Succinate dehydrogenase assembly factor 2, mitochondrial, found in Debaryomyces hansenii (strain ATCC 36239 / CBS 767 / BCRC 21394 / JCM 1990 / NBRC 0083 / IGC 2968) (Yeast).